The following is a 264-amino-acid chain: DNA-directed RNA polymerase subunit Rpo3 (264 aa).

[3Fe-4S] cluster-binding residues include Cys203, Cys206, and Cys209.

This sequence belongs to the archaeal Rpo3/eukaryotic RPB3 RNA polymerase subunit family. Part of the RNA polymerase complex. [3Fe-4S] cluster is required as a cofactor.

The protein resides in the cytoplasm. The catalysed reaction is RNA(n) + a ribonucleoside 5'-triphosphate = RNA(n+1) + diphosphate. Functionally, DNA-dependent RNA polymerase (RNAP) catalyzes the transcription of DNA into RNA using the four ribonucleoside triphosphates as substrates. The polypeptide is DNA-directed RNA polymerase subunit Rpo3 (Methanothermobacter thermautotrophicus (strain ATCC 29096 / DSM 1053 / JCM 10044 / NBRC 100330 / Delta H) (Methanobacterium thermoautotrophicum)).